Consider the following 423-residue polypeptide: MTLLIKNGRLVDPKSNRDEVLDILIENDKIVKIGLNLSVENAEIVDARGLVVAPGLIDVHVHFREPGQTHKETIHSGAKSAAAGGFTRVVMMANTKPILSTPKVLTETLEIADKEDIKIDAVGSITQDFDGEHLTDFDELIKAGAIGFSDDGIPLTDAGVLRKALQKAKLTDSLISIHEEDPNLIGTLGVNDGEVAHKCGFTGAPTVSEYSMMARDSMIAYETGARLHIQHLSAGESVEVVRFAKNLGAKITAEVTPQHFSITEQMIFEQGTNAKLNPPLRSTTDIGKIIEGLKDGTIDVIATDHAPHTREEKNVSLDKAPSGMIGLETSLQLGLTNLVAKGHLTLSELLTKMTVNPAKLYNFDAGYLAENGPADLVIFDAENDYQVGETFDSKATNSPFIKQKVQGQVKYTICDGKIVYQAK.

Histidine 60 and histidine 62 together coordinate Zn(2+). Residues 62–64 (HFR) and asparagine 94 each bind substrate. Positions 151, 178, and 231 each coordinate Zn(2+). Asparagine 277 is a substrate binding site. Aspartate 304 contacts Zn(2+). Aspartate 304 is a catalytic residue. Histidine 308 is a binding site for substrate.

This sequence belongs to the metallo-dependent hydrolases superfamily. DHOase family. Class I DHOase subfamily. Zn(2+) is required as a cofactor.

It carries out the reaction (S)-dihydroorotate + H2O = N-carbamoyl-L-aspartate + H(+). It participates in pyrimidine metabolism; UMP biosynthesis via de novo pathway; (S)-dihydroorotate from bicarbonate: step 3/3. Functionally, catalyzes the reversible cyclization of carbamoyl aspartate to dihydroorotate. In Lactococcus lactis subsp. lactis (strain IL1403) (Streptococcus lactis), this protein is Dihydroorotase.